The following is a 253-amino-acid chain: Diphthine synthase (253 aa).

Residues Asp83, Leu86, 111 to 112 (SI), Leu163, and Leu205 each bind S-adenosyl-L-methionine.

Belongs to the diphthine synthase family. Homodimer.

The enzyme catalyses 2-[(3S)-amino-3-carboxypropyl]-L-histidyl-[translation elongation factor 2] + 3 S-adenosyl-L-methionine = diphthine-[translation elongation factor 2] + 3 S-adenosyl-L-homocysteine + 3 H(+). It participates in protein modification; peptidyl-diphthamide biosynthesis. S-adenosyl-L-methionine-dependent methyltransferase that catalyzes the trimethylation of the amino group of the modified target histidine residue in translation elongation factor 2 (EF-2), to form an intermediate called diphthine. The three successive methylation reactions represent the second step of diphthamide biosynthesis. The sequence is that of Diphthine synthase from Pyrobaculum neutrophilum (strain DSM 2338 / JCM 9278 / NBRC 100436 / V24Sta) (Thermoproteus neutrophilus).